The following is a 792-amino-acid chain: Cadherin-11 (792 aa).

The first 22 residues, 1 to 22 (MKEDNCLHAALICLGMLYYSHA), serve as a signal peptide directing secretion. Positions 23–53 (ITTEKLNHVRPSLHGHHEKGKEGQVLHRSKR) are excised as a propeptide. Cadherin domains are found at residues 54 to 159 (GWVW…PPEF), 160 to 268 (LHEN…PPKF), 269 to 383 (PQSV…PPVF), 384 to 486 (LKPS…DNAP), and 487 to 608 (KFAA…YILN). The Extracellular segment spans residues 54–613 (GWVWNQFFVI…AYILNAGLST (560 aa)). N-linked (GlcNAc...) asparagine glycans are attached at residues Asn455, Asn536, and Asn594. Residues 614-634 (GALIAILACIVILLVIVVLFV) traverse the membrane as a helical segment. Topologically, residues 635 to 792 (TLKRQKKEPL…GSKDTFDDDS (158 aa)) are cytoplasmic.

The protein resides in the cell membrane. Functionally, cadherins are calcium-dependent cell adhesion proteins. They preferentially interact with themselves in a homophilic manner in connecting cells; cadherins may thus contribute to the sorting of heterogeneous cell types. Required for proper focal adhesion assembly. Involved in the regulation of cell migration. In Gallus gallus (Chicken), this protein is Cadherin-11 (CDH11).